Here is a 339-residue protein sequence, read N- to C-terminus: MLRVAINGFGRIGRSVLRALYESGKRDQIEIVAVNELSQPEGMAHLLQYDSTHGRFLHKVTHDQEYLYIDLPNGSQDRIRIVHQADISLLPWQSLQVDLVLDCTGVYGSKADGERHIDAGAKKVLFSHPGSADLDNTIIYGVNHDTLLPEHRVVSNGSCTTNCIIPVIKAIDDAFGIESGTITTIHSAMNDQPVIDAYHTDLRRTRAASQSIIPVDTKLHKGIERIFPKFSNKFEAISVRVPTVNVTAMDLSVTINTNVKVNDINQTIVNASQCTLHNIVDYTEAPLVSIDFNHDPHSAIVDGSQTRVSNGHLVKMLVWCDNEWGFANRMLDTALVMKK.

11 to 12 (RI) serves as a coordination point for NAD(+). Residues 158 to 160 (SCT), arginine 204, 217 to 218 (TK), and arginine 240 contribute to the substrate site. Catalysis depends on cysteine 159, which acts as the Nucleophile. Asparagine 322 serves as a coordination point for NAD(+).

This sequence belongs to the glyceraldehyde-3-phosphate dehydrogenase family. Epd subfamily. As to quaternary structure, homotetramer.

Its subcellular location is the cytoplasm. It carries out the reaction D-erythrose 4-phosphate + NAD(+) + H2O = 4-phospho-D-erythronate + NADH + 2 H(+). It participates in cofactor biosynthesis; pyridoxine 5'-phosphate biosynthesis; pyridoxine 5'-phosphate from D-erythrose 4-phosphate: step 1/5. Catalyzes the NAD-dependent conversion of D-erythrose 4-phosphate to 4-phosphoerythronate. In Aliivibrio salmonicida (strain LFI1238) (Vibrio salmonicida (strain LFI1238)), this protein is D-erythrose-4-phosphate dehydrogenase.